The sequence spans 343 residues: Anthranilate phosphoribosyltransferase (343 aa).

5-phospho-alpha-D-ribose 1-diphosphate-binding positions include glycine 84, 87–88 (GD), threonine 92, 94–97 (NIST), 112–120 (KHGNRGVSS), and serine 124. Residue glycine 84 participates in anthranilate binding. Serine 96 contributes to the Mg(2+) binding site. Asparagine 115 serves as a coordination point for anthranilate. Arginine 170 provides a ligand contact to anthranilate. Mg(2+) is bound by residues aspartate 229 and glutamate 230.

This sequence belongs to the anthranilate phosphoribosyltransferase family. In terms of assembly, homodimer. It depends on Mg(2+) as a cofactor.

It catalyses the reaction N-(5-phospho-beta-D-ribosyl)anthranilate + diphosphate = 5-phospho-alpha-D-ribose 1-diphosphate + anthranilate. It functions in the pathway amino-acid biosynthesis; L-tryptophan biosynthesis; L-tryptophan from chorismate: step 2/5. Its function is as follows. Catalyzes the transfer of the phosphoribosyl group of 5-phosphorylribose-1-pyrophosphate (PRPP) to anthranilate to yield N-(5'-phosphoribosyl)-anthranilate (PRA). The chain is Anthranilate phosphoribosyltransferase from Burkholderia multivorans (strain ATCC 17616 / 249).